A 236-amino-acid polypeptide reads, in one-letter code: 2,3,4,5-tetrahydropyridine-2,6-dicarboxylate N-acetyltransferase (236 aa).

Belongs to the transferase hexapeptide repeat family. DapH subfamily.

It catalyses the reaction (S)-2,3,4,5-tetrahydrodipicolinate + acetyl-CoA + H2O = L-2-acetamido-6-oxoheptanedioate + CoA. The protein operates within amino-acid biosynthesis; L-lysine biosynthesis via DAP pathway; LL-2,6-diaminopimelate from (S)-tetrahydrodipicolinate (acetylase route): step 1/3. Catalyzes the transfer of an acetyl group from acetyl-CoA to tetrahydrodipicolinate. This chain is 2,3,4,5-tetrahydropyridine-2,6-dicarboxylate N-acetyltransferase, found in Lactiplantibacillus plantarum (strain ATCC BAA-793 / NCIMB 8826 / WCFS1) (Lactobacillus plantarum).